The chain runs to 197 residues: Adenine phosphoribosyltransferase (197 aa).

The protein belongs to the purine/pyrimidine phosphoribosyltransferase family. In terms of assembly, homodimer.

The protein resides in the cytoplasm. It carries out the reaction AMP + diphosphate = 5-phospho-alpha-D-ribose 1-diphosphate + adenine. It functions in the pathway purine metabolism; AMP biosynthesis via salvage pathway; AMP from adenine: step 1/1. In terms of biological role, catalyzes a salvage reaction resulting in the formation of AMP, that is energically less costly than de novo synthesis. This chain is Adenine phosphoribosyltransferase, found in Ralstonia nicotianae (strain ATCC BAA-1114 / GMI1000) (Ralstonia solanacearum).